We begin with the raw amino-acid sequence, 264 residues long: NAD-capped RNA hydrolase NudC (264 aa).

Residues Cys99 and Cys102 each coordinate Zn(2+). Position 112 (Glu112) interacts with substrate. Zn(2+)-binding residues include Cys117 and Cys120. Tyr125 is a binding site for substrate. In terms of domain architecture, Nudix hydrolase spans 126-253; that stretch reads PVICPSIIVA…TIARKLIHVT (128 aa). Positions 162, 178, and 182 each coordinate a divalent metal cation. The short motif at 163-184 is the Nudix box element; sequence GFVEVGETFEQAVQREVFEETG. Residue 196–203 coordinates substrate; sequence QPWAFPNS. Position 223 (Glu223) interacts with a divalent metal cation. A substrate-binding site is contributed by Ala246.

It belongs to the Nudix hydrolase family. NudC subfamily. Homodimer. Mg(2+) serves as cofactor. It depends on Mn(2+) as a cofactor. Requires Zn(2+) as cofactor.

The catalysed reaction is a 5'-end NAD(+)-phospho-ribonucleoside in mRNA + H2O = a 5'-end phospho-adenosine-phospho-ribonucleoside in mRNA + beta-nicotinamide D-ribonucleotide + 2 H(+). The enzyme catalyses NAD(+) + H2O = beta-nicotinamide D-ribonucleotide + AMP + 2 H(+). It carries out the reaction NADH + H2O = reduced beta-nicotinamide D-ribonucleotide + AMP + 2 H(+). Its function is as follows. mRNA decapping enzyme that specifically removes the nicotinamide adenine dinucleotide (NAD) cap from a subset of mRNAs by hydrolyzing the diphosphate linkage to produce nicotinamide mononucleotide (NMN) and 5' monophosphate mRNA. The NAD-cap is present at the 5'-end of some mRNAs and stabilizes RNA against 5'-processing. Has preference for mRNAs with a 5'-end purine. Catalyzes the hydrolysis of a broad range of dinucleotide pyrophosphates. This chain is NAD-capped RNA hydrolase NudC, found in Haemophilus influenzae (strain ATCC 51907 / DSM 11121 / KW20 / Rd).